We begin with the raw amino-acid sequence, 197 residues long: Imidazoleglycerol-phosphate dehydratase (197 aa).

It belongs to the imidazoleglycerol-phosphate dehydratase family.

It is found in the cytoplasm. The enzyme catalyses D-erythro-1-(imidazol-4-yl)glycerol 3-phosphate = 3-(imidazol-4-yl)-2-oxopropyl phosphate + H2O. It functions in the pathway amino-acid biosynthesis; L-histidine biosynthesis; L-histidine from 5-phospho-alpha-D-ribose 1-diphosphate: step 6/9. The protein is Imidazoleglycerol-phosphate dehydratase of Streptomyces avermitilis (strain ATCC 31267 / DSM 46492 / JCM 5070 / NBRC 14893 / NCIMB 12804 / NRRL 8165 / MA-4680).